The chain runs to 116 residues: MSFSEQQCKQPCVPPPCLPKTQEQCQAKAEEVCLPTCQHPCQDKCLVQAQEVCLSQCQESSQEKCPQQGQEPYLPPCQDQCPPQCAEPCQELFQTKCVEVCPQKVQEKCSSPGKGK.

This is Proline-rich protein 9 (PRR9) from Homo sapiens (Human).